Here is a 73-residue protein sequence, read N- to C-terminus: U-scoloptoxin(03)-Ssd1b (73 aa).

Residues 1-23 (MKSSMAVLLVMGLIIFTLDKCYS) form the signal peptide.

In terms of processing, contains 3 disulfide bonds. In terms of tissue distribution, expressed by the venom gland.

The protein localises to the secreted. The chain is U-scoloptoxin(03)-Ssd1b from Scolopendra dehaani (Thai centipede).